We begin with the raw amino-acid sequence, 85 residues long: UPF0291 protein SpyM3_1470 (85 aa).

A disordered region spans residues 62–85 (TPEKLRQVQREKGLHGRSLDDPKS).

Belongs to the UPF0291 family.

It localises to the cytoplasm. The protein is UPF0291 protein SpyM3_1470 of Streptococcus pyogenes serotype M3 (strain ATCC BAA-595 / MGAS315).